Here is a 107-residue protein sequence, read N- to C-terminus: Integration host factor subunit alpha (107 aa).

This sequence belongs to the bacterial histone-like protein family. Heterodimer of an alpha and a beta chain.

In terms of biological role, this protein is one of the two subunits of integration host factor, a specific DNA-binding protein that functions in genetic recombination as well as in transcriptional and translational control. This chain is Integration host factor subunit alpha, found in Brucella suis (strain ATCC 23445 / NCTC 10510).